Consider the following 710-residue polypeptide: Polyribonucleotide nucleotidyltransferase (710 aa).

Positions 489 and 495 each coordinate Mg(2+). In terms of domain architecture, KH spans 556-615 (PKIDTIKIDVDKIKVVIGKGGETIDKIIAETGVKIDIDDEGNVSIYSSDQAAINRTKEII). An S1 motif domain is found at 625-693 (GEVYHAKVVR…EKGRVDASMK (69 aa)). Residues 691-710 (SMKALIPRPPKPEKKEEKHD) form a disordered region. Positions 700 to 710 (PKPEKKEEKHD) are enriched in basic and acidic residues.

Mg(2+) is required as a cofactor.

Its subcellular location is the cytoplasm. It catalyses the reaction RNA(n+1) + phosphate = RNA(n) + a ribonucleoside 5'-diphosphate. In terms of biological role, involved in mRNA degradation. Catalyzes the phosphorolysis of single-stranded polyribonucleotides processively in the 3'- to 5'-direction. In Streptococcus pyogenes serotype M6 (strain ATCC BAA-946 / MGAS10394), this protein is Polyribonucleotide nucleotidyltransferase.